The sequence spans 68 residues: Large ribosomal subunit protein uL29 (68 aa).

This sequence belongs to the universal ribosomal protein uL29 family.

The protein is Large ribosomal subunit protein uL29 of Methanobrevibacter smithii (strain ATCC 35061 / DSM 861 / OCM 144 / PS).